The primary structure comprises 343 residues: Pentatricopeptide repeat-containing protein At1g06270 (343 aa).

PPR repeat units lie at residues 98 to 133 (PKIV…GCLP), 134 to 169 (NPQT…GYSP), 170 to 204 (DTGT…GCIP), 205 to 240 (DVES…GISP), 241 to 275 (RKGM…DYPV), and 276 to 310 (EFES…GFIP).

Belongs to the PPR family. P subfamily.

The protein is Pentatricopeptide repeat-containing protein At1g06270 of Arabidopsis thaliana (Mouse-ear cress).